Here is a 158-residue protein sequence, read N- to C-terminus: NAD(P)H-quinone oxidoreductase subunit J, chloroplastic (158 aa).

This sequence belongs to the complex I 30 kDa subunit family. As to quaternary structure, NDH is composed of at least 16 different subunits, 5 of which are encoded in the nucleus.

Its subcellular location is the plastid. The protein resides in the chloroplast thylakoid membrane. The catalysed reaction is a plastoquinone + NADH + (n+1) H(+)(in) = a plastoquinol + NAD(+) + n H(+)(out). It carries out the reaction a plastoquinone + NADPH + (n+1) H(+)(in) = a plastoquinol + NADP(+) + n H(+)(out). NDH shuttles electrons from NAD(P)H:plastoquinone, via FMN and iron-sulfur (Fe-S) centers, to quinones in the photosynthetic chain and possibly in a chloroplast respiratory chain. The immediate electron acceptor for the enzyme in this species is believed to be plastoquinone. Couples the redox reaction to proton translocation, and thus conserves the redox energy in a proton gradient. The protein is NAD(P)H-quinone oxidoreductase subunit J, chloroplastic of Fagopyrum esculentum subsp. ancestrale (Wild buckwheat).